The chain runs to 547 residues: Fumarate reductase (CoM/CoB) subunit A (547 aa).

It belongs to the FAD-dependent oxidoreductase 2 family. In terms of assembly, subunit A of the heterodimeric fumarate reductase of methanogenic Archaea, composed of subunits A (TfrA) and B (TfrB). An oxidized flavin is required as a cofactor.

It localises to the cytoplasm. It catalyses the reaction coenzyme B + coenzyme M + fumarate = coenzyme M-coenzyme B heterodisulfide + succinate. Its function is as follows. Catalyzes the reduction of fumarate with reduced coenzyme M (CoM-S-H) and coenzyme B (CoB-S-H). In vitro, is able to reduces fumarate with reduced benzyl viologen, oxidize CoM-S-H and CoB-S-H to CoM-S-S-CoB with methylene blue, and reduce CoM-S-S-CoB with reduced benzyl viologen. The enzyme has specificity for the two thiol compounds as the CoB--CoM heterodisulfide reductase. The enzyme is very sensitive to oxygen. This Methanothermobacter marburgensis (strain ATCC BAA-927 / DSM 2133 / JCM 14651 / NBRC 100331 / OCM 82 / Marburg) (Methanobacterium thermoautotrophicum) protein is Fumarate reductase (CoM/CoB) subunit A.